The chain runs to 333 residues: Glutamyl-tRNA reductase (333 aa).

Residues 60–63 (TCHR), Ser-110, 115–117 (ETE), and Gln-121 contribute to the substrate site. The active-site Nucleophile is Cys-61. 189 to 194 (GYSEIN) is an NADP(+) binding site.

The protein belongs to the glutamyl-tRNA reductase family. In terms of assembly, homodimer.

The catalysed reaction is (S)-4-amino-5-oxopentanoate + tRNA(Glu) + NADP(+) = L-glutamyl-tRNA(Glu) + NADPH + H(+). It participates in porphyrin-containing compound metabolism; protoporphyrin-IX biosynthesis; 5-aminolevulinate from L-glutamyl-tRNA(Glu): step 1/2. Functionally, catalyzes the NADPH-dependent reduction of glutamyl-tRNA(Glu) to glutamate 1-semialdehyde (GSA). The protein is Glutamyl-tRNA reductase of Chlamydia muridarum (strain MoPn / Nigg).